A 153-amino-acid polypeptide reads, in one-letter code: ORM1-like protein 1 (153 aa).

At M1–Y26 the chain is on the cytoplasmic side. The next 2 membrane-spanning stretches (helical) occupy residues A27–P46 and V47–V67. Residues K68–K100 lie on the Cytoplasmic side of the membrane. The helical transmembrane segment at F101 to P121 threads the bilayer. The Extracellular segment spans residues T122–H123. Residues F124–G144 traverse the membrane as a helical segment. Topologically, residues V145 to Y153 are cytoplasmic.

The protein belongs to the ORM family. In terms of assembly, ceramide-sensitive subunit of the serine palmitoyltransferase (SPT) complex, which is also composed of SPTLC1, SPTLC2/3 and SPTSSA/B.

The protein resides in the endoplasmic reticulum membrane. In terms of biological role, plays an essential role in the homeostatic regulation of sphingolipid de novo biosynthesis by modulating the activity of the serine palmitoyltransferase (SPT) in response to ceramide levels. When complexed to SPT, the binding of ceramides to its N-terminus stabilizes a conformation that block SPT substrate entry, hence preventing SPT catalytic activity. Through this mechanism, maintains ceramide levels at sufficient concentrations for the production of complex sphingolipids, but which prevents the accumulation of ceramides to levels that trigger apoptosis. The polypeptide is ORM1-like protein 1 (ormdl1) (Xenopus laevis (African clawed frog)).